We begin with the raw amino-acid sequence, 348 residues long: Uroporphyrinogen decarboxylase (348 aa).

Substrate-binding positions include 28–32 (RQAGR), aspartate 78, tyrosine 154, threonine 209, and histidine 325.

This sequence belongs to the uroporphyrinogen decarboxylase family. In terms of assembly, homodimer.

The protein resides in the cytoplasm. It carries out the reaction uroporphyrinogen III + 4 H(+) = coproporphyrinogen III + 4 CO2. It participates in porphyrin-containing compound metabolism; protoporphyrin-IX biosynthesis; coproporphyrinogen-III from 5-aminolevulinate: step 4/4. Catalyzes the decarboxylation of four acetate groups of uroporphyrinogen-III to yield coproporphyrinogen-III. This is Uroporphyrinogen decarboxylase from Rhodopseudomonas palustris (strain BisB5).